The following is a 510-amino-acid chain: Glycogen synthase (510 aa).

Position 18 (Lys18) interacts with ADP-alpha-D-glucose.

Belongs to the glycosyltransferase 1 family. Bacterial/plant glycogen synthase subfamily.

It carries out the reaction [(1-&gt;4)-alpha-D-glucosyl](n) + ADP-alpha-D-glucose = [(1-&gt;4)-alpha-D-glucosyl](n+1) + ADP + H(+). The protein operates within glycan biosynthesis; glycogen biosynthesis. Its function is as follows. Synthesizes alpha-1,4-glucan chains using ADP-glucose. The polypeptide is Glycogen synthase (Bordetella bronchiseptica (strain ATCC BAA-588 / NCTC 13252 / RB50) (Alcaligenes bronchisepticus)).